The following is a 232-amino-acid chain: Large ribosomal subunit protein uL1 (232 aa).

The protein belongs to the universal ribosomal protein uL1 family. As to quaternary structure, part of the 50S ribosomal subunit.

In terms of biological role, binds directly to 23S rRNA. The L1 stalk is quite mobile in the ribosome, and is involved in E site tRNA release. Its function is as follows. Protein L1 is also a translational repressor protein, it controls the translation of the L11 operon by binding to its mRNA. The polypeptide is Large ribosomal subunit protein uL1 (Burkholderia cenocepacia (strain ATCC BAA-245 / DSM 16553 / LMG 16656 / NCTC 13227 / J2315 / CF5610) (Burkholderia cepacia (strain J2315))).